Here is a 227-residue protein sequence, read N- to C-terminus: Cytochrome c oxidase subunit 2 (227 aa).

Over 1 to 14 (MAYPLQLGLQDASS) the chain is Mitochondrial intermembrane. The helical transmembrane segment at 15–45 (PIMEELMNFHDHTLMIVFLISSLVLYLISLM) threads the bilayer. Residues 46–59 (LTTKLIHTSTMDAQ) are Mitochondrial matrix-facing. A helical membrane pass occupies residues 60 to 87 (EVETVWTILPAIILILIALPSLRILYMM). The Mitochondrial intermembrane portion of the chain corresponds to 88 to 227 (DEINNPVLTV…LFENWSLSLT (140 aa)). Residues His-161, Cys-196, Glu-198, Cys-200, His-204, and Met-207 each coordinate Cu cation. Glu-198 is a Mg(2+) binding site.

This sequence belongs to the cytochrome c oxidase subunit 2 family. In terms of assembly, component of the cytochrome c oxidase (complex IV, CIV), a multisubunit enzyme composed of 14 subunits. The complex is composed of a catalytic core of 3 subunits MT-CO1, MT-CO2 and MT-CO3, encoded in the mitochondrial DNA, and 11 supernumerary subunits COX4I, COX5A, COX5B, COX6A, COX6B, COX6C, COX7A, COX7B, COX7C, COX8 and NDUFA4, which are encoded in the nuclear genome. The complex exists as a monomer or a dimer and forms supercomplexes (SCs) in the inner mitochondrial membrane with NADH-ubiquinone oxidoreductase (complex I, CI) and ubiquinol-cytochrome c oxidoreductase (cytochrome b-c1 complex, complex III, CIII), resulting in different assemblies (supercomplex SCI(1)III(2)IV(1) and megacomplex MCI(2)III(2)IV(2)). Found in a complex with TMEM177, COA6, COX18, COX20, SCO1 and SCO2. Interacts with TMEM177 in a COX20-dependent manner. Interacts with COX20. Interacts with COX16. It depends on Cu cation as a cofactor.

It is found in the mitochondrion inner membrane. The enzyme catalyses 4 Fe(II)-[cytochrome c] + O2 + 8 H(+)(in) = 4 Fe(III)-[cytochrome c] + 2 H2O + 4 H(+)(out). Its function is as follows. Component of the cytochrome c oxidase, the last enzyme in the mitochondrial electron transport chain which drives oxidative phosphorylation. The respiratory chain contains 3 multisubunit complexes succinate dehydrogenase (complex II, CII), ubiquinol-cytochrome c oxidoreductase (cytochrome b-c1 complex, complex III, CIII) and cytochrome c oxidase (complex IV, CIV), that cooperate to transfer electrons derived from NADH and succinate to molecular oxygen, creating an electrochemical gradient over the inner membrane that drives transmembrane transport and the ATP synthase. Cytochrome c oxidase is the component of the respiratory chain that catalyzes the reduction of oxygen to water. Electrons originating from reduced cytochrome c in the intermembrane space (IMS) are transferred via the dinuclear copper A center (CU(A)) of subunit 2 and heme A of subunit 1 to the active site in subunit 1, a binuclear center (BNC) formed by heme A3 and copper B (CU(B)). The BNC reduces molecular oxygen to 2 water molecules using 4 electrons from cytochrome c in the IMS and 4 protons from the mitochondrial matrix. The polypeptide is Cytochrome c oxidase subunit 2 (MT-CO2) (Taterillus emini (Emin's gerbil)).